The chain runs to 300 residues: tRNA pseudouridine synthase B (300 aa).

The active-site Nucleophile is D38.

Belongs to the pseudouridine synthase TruB family. Type 1 subfamily.

The catalysed reaction is uridine(55) in tRNA = pseudouridine(55) in tRNA. Functionally, responsible for synthesis of pseudouridine from uracil-55 in the psi GC loop of transfer RNAs. This chain is tRNA pseudouridine synthase B, found in Dehalococcoides mccartyi (strain ATCC BAA-2100 / JCM 16839 / KCTC 5957 / BAV1).